Here is a 422-residue protein sequence, read N- to C-terminus: Phospholipase D Z (422 aa).

Residues Met-1–Ser-18 form the signal peptide. Asn-53 is a glycosylation site (N-linked (GlcNAc...) asparagine). The PLD phosphodiesterase 1 domain occupies Gly-148 to Ser-175. Active-site residues include His-153, Lys-155, and Asp-160. N-linked (GlcNAc...) asparagine glycans are attached at residues Asn-225 and Asn-320. Positions Phe-357–Tyr-383 constitute a PLD phosphodiesterase 2 domain. Catalysis depends on residues His-362, Lys-364, and Asp-369. A glycan (N-linked (GlcNAc...) asparagine) is linked at Asn-378.

The protein belongs to the phospholipase D family.

The catalysed reaction is a 1,2-diacyl-sn-glycero-3-phosphocholine + H2O = a 1,2-diacyl-sn-glycero-3-phosphate + choline + H(+). Its activity is regulated as follows. Inhibited by butan-1-ol. In terms of biological role, hydrolyzes membrane phospholipids, such as PtdCho (phosphatidylcholine), producing the free headgroup and PtdOH (phosphatidic acid; signaling molecule on its own). This Dictyostelium discoideum (Social amoeba) protein is Phospholipase D Z (pldZ).